Consider the following 88-residue polypeptide: Small ribosomal subunit protein bS20 (88 aa).

A disordered region spans residues 1–27 (MANTPQAKKRARQNEKARKHNASMRSM). Basic residues predominate over residues 7–22 (AKKRARQNEKARKHNA).

This sequence belongs to the bacterial ribosomal protein bS20 family.

Functionally, binds directly to 16S ribosomal RNA. This chain is Small ribosomal subunit protein bS20, found in Cellvibrio japonicus (strain Ueda107) (Pseudomonas fluorescens subsp. cellulosa).